The following is a 446-amino-acid chain: NADP-specific glutamate dehydrogenase (446 aa).

Substrate is bound by residues Lys92, Gln113, and Lys116. Residue Lys128 is the Proton donor of the active site. Residue Gly167 coordinates substrate. NADP(+)-binding residues include Thr211 and Asn242. Ser379 is a binding site for substrate.

It belongs to the Glu/Leu/Phe/Val dehydrogenases family. In terms of assembly, homohexamer.

The enzyme catalyses L-glutamate + NADP(+) + H2O = 2-oxoglutarate + NH4(+) + NADPH + H(+). Catalyzes the reversible oxidative deamination of glutamate to a-ketoglutarate and ammonia. The protein is NADP-specific glutamate dehydrogenase (gdhA) of Unknown prokaryotic organism.